Consider the following 332-residue polypeptide: RING finger protein 225 (332 aa).

The segment at M1–L55 is disordered. The segment covering S15–S27 has biased composition (low complexity). A compositionally biased stretch (acidic residues) spans E36–D46. The RING-type zinc finger occupies C63 to R111. Residues G121–L187 are disordered. The chain crosses the membrane as a helical span at residues A205–I225. Residues T259–Q332 are disordered. 2 stretches are compositionally biased toward basic and acidic residues: residues A280–V295 and A323–Q332.

The protein resides in the membrane. This Mus musculus (Mouse) protein is RING finger protein 225.